We begin with the raw amino-acid sequence, 518 residues long: Pumilio homolog 14 (518 aa).

Disordered stretches follow at residues 26 to 46 and 77 to 114; these read TMAS…QPEN and VGQN…PPMG. Residues 29-44 are compositionally biased toward low complexity; it reads SSSSQPQPISSPFHQP. The 341-residue stretch at 178 to 518 folds into the PUM-HD domain; it reads YTNRFGYEGY…GNKVLEKLNI (341 aa). Residues 206–235 form a Pumilio 1; degenerate repeat; that stretch reads SAFAKDKEMSERLGMSIFQGTKETVDAIYN. Pumilio repeat units lie at residues 236-271, 275-313, 314-348, 349-387, 388-423, 424-459, and 460-494; these read GLIG…QLVD, QQMF…RIVD, VVRT…LLLE, LIVQ…RLIM, EAIA…ALVR, QLIG…IVID, and LLRE…MLRY.

It localises to the cytoplasm. Its subcellular location is the nucleus. Functionally, sequence-specific RNA-binding protein that regulates translation and mRNA stability by binding the 3'-UTR of target mRNAs. In Arabidopsis thaliana (Mouse-ear cress), this protein is Pumilio homolog 14 (APUM14).